An 83-amino-acid polypeptide reads, in one-letter code: Toxin Aam1 (83 aa).

A signal peptide spans 1 to 19 (MNYLVMISLALLLMIGVES). Positions 21–82 (RDGYIVYPHN…PIYDRSYKCY (62 aa)) constitute an LCN-type CS-alpha/beta domain. Cystine bridges form between cysteine 31–cysteine 81, cysteine 35–cysteine 53, cysteine 39–cysteine 63, and cysteine 43–cysteine 65.

Belongs to the long (4 C-C) scorpion toxin superfamily. Sodium channel inhibitor family. Alpha subfamily. Post-translationally, the C-terminal basic residue is removed by a carboxypeptidase. In terms of tissue distribution, expressed by the venom gland.

It localises to the secreted. In terms of biological role, alpha toxins bind voltage-independently at site-3 of sodium channels (Nav) and inhibit the inactivation of the activated channels, thereby blocking neuronal transmission. In Androctonus amoreuxi (African fattail scorpion), this protein is Toxin Aam1 (H1).